A 352-amino-acid polypeptide reads, in one-letter code: Ion-translocating oxidoreductase complex subunit D (352 aa).

5 consecutive transmembrane segments (helical) span residues 20 to 40 (IMLLVLLAAIPGIATQLWFFG), 42 to 62 (GTLVQIILAVISALSAEALVL), 68 to 88 (PIAAILKDNSALLTGLLLAVS), 89 to 109 (IPPLAPWWMVVLGTVFAVIIA), and 123 to 143 (PAMIGYVVLLISFPVQMTNWL). Threonine 187 is modified (FMN phosphoryl threonine). A run of 5 helical transmembrane segments spans residues 217–237 (GAGWQWVNLAWLAGGVWLLAI), 244–264 (IPVSFLVSLALCATLGWLFAP), 267–287 (LASPQIHMLSGATMLGAFFIL), 301–321 (LIFGALAGVLVWLIRSFGGYP), and 322–342 (DGVAFAVLLANITVPLIDYYT).

The protein belongs to the NqrB/RnfD family. In terms of assembly, the complex is composed of six subunits: RsxA, RsxB, RsxC, RsxD, RsxE and RsxG. Requires FMN as cofactor.

The protein localises to the cell inner membrane. Functionally, part of a membrane-bound complex that couples electron transfer with translocation of ions across the membrane. Required to maintain the reduced state of SoxR. This chain is Ion-translocating oxidoreductase complex subunit D, found in Escherichia fergusonii (strain ATCC 35469 / DSM 13698 / CCUG 18766 / IAM 14443 / JCM 21226 / LMG 7866 / NBRC 102419 / NCTC 12128 / CDC 0568-73).